The following is a 203-amino-acid chain: Outer-membrane lipoprotein carrier protein (203 aa).

The N-terminal stretch at 1 to 19 (MKKSIVVLFSAVLPFAVFA) is a signal peptide.

This sequence belongs to the LolA family. In terms of assembly, monomer.

It is found in the periplasm. Its function is as follows. Participates in the translocation of lipoproteins from the inner membrane to the outer membrane. Only forms a complex with a lipoprotein if the residue after the N-terminal Cys is not an aspartate (The Asp acts as a targeting signal to indicate that the lipoprotein should stay in the inner membrane). The sequence is that of Outer-membrane lipoprotein carrier protein from Shewanella amazonensis (strain ATCC BAA-1098 / SB2B).